Reading from the N-terminus, the 290-residue chain is Dual-specificity RNA pseudouridine synthase RluF (290 aa).

Residues 7–72 (VRLNKYISES…EAEDLVLIAL (66 aa)) enclose the S4 RNA-binding domain. Interaction with RNA regions lie at residues 105–108 (RLDK) and 187–190 (RQIR). The Nucleophile role is filled by D107. The interval 243 to 290 (VKPKAKAKPKTAGIKRPVVKMEKTAEKGGRPASNGKRFTSPGRKKKGR) is disordered. Residues 261 to 271 (VKMEKTAEKGG) are compositionally biased toward basic and acidic residues.

This sequence belongs to the pseudouridine synthase RsuA family. Monomer.

It carries out the reaction uridine(2604) in 23S rRNA = pseudouridine(2604) in 23S rRNA. The catalysed reaction is uridine(35) in tRNA(Tyr) = pseudouridine(35) in tRNA(Tyr). Dual specificity enzyme that catalyzes the synthesis of pseudouridine from uracil-2604 in 23S ribosomal RNA and from uracil-35 in the anticodon of tRNA(Tyr). Can, to a small extent, also react with uracil-2605. This Escherichia coli (strain K12) protein is Dual-specificity RNA pseudouridine synthase RluF (rluF).